The sequence spans 1026 residues: Multidrug resistance protein MdtC (1026 aa).

11 helical membrane-spanning segments follow: residues 15-35 (ILIAAAITLCGILGFRLLPVA), 333-353 (EVEETLAISVALVILVVFLFL), 360-380 (LIPAVAVPVSLIGTFAAMYLC), 387-407 (LSLMALTIATGFVVDDAIVVL), 431-451 (VGFTVISMSLSLVAVFLPLLL), 463-483 (FAVTLSVAIGISLVVSLTLTP), 528-548 (LVGVVFLGTVALNIWLYIAIP), 853-873 (LILIVAAIATVYIVLGILYES), 897-917 (LFNAPFSLIALIGIMLLIGIV), 953-973 (PIMMTTLAALFGALPLVLSGG), and 984-1004 (ITIVGGLVMSQLLTLYTTPVV).

The protein belongs to the resistance-nodulation-cell division (RND) (TC 2.A.6) family. MdtC subfamily. As to quaternary structure, part of a tripartite efflux system composed of MdtA, MdtB and MdtC. MdtC forms a heteromultimer with MdtB.

It localises to the cell inner membrane. The sequence is that of Multidrug resistance protein MdtC from Salmonella gallinarum (strain 287/91 / NCTC 13346).